The sequence spans 357 residues: Ketoreductase CTB6 (357 aa).

Residue Tyr172 coordinates NADP(+).

This sequence belongs to the NAD(P)-dependent epimerase/dehydratase family. Dihydroflavonol-4-reductase subfamily.

It functions in the pathway mycotoxin biosynthesis. Functionally, ketoreductase; part of the gene cluster that mediates the biosynthesis of cercosporin, a light-activated, non-host-selective toxin. The perylenequinone chromophore of cercosporin absorbs light energy to attain an electronically-activated triplet state and produces active oxygen species such as the hydroxyl radical, superoxide, hydrogen peroxide or singlet oxygen upon reaction with oxygen molecules. These reactive oxygen species cause damage to various cellular components including lipids, proteins and nucleic acids. The first step of cercosporin biosynthesis is performed by the polyketide synthase CTB1 which catalyzes the formation of nor-toralactone. The starter unit acyltransferase (SAT) domain of CTB1 initiates polyketide extension by the selective utilization of acetyl-CoA, which is elongated to the heptaketide in the beta-ketoacyl synthase (KS) domain by successive condensations with six malonyl units introduced by the malonyl acyltransferase (MAT) domain. The product template (PT) domain catalyzes C4-C9 and C2-C11 aldol cyclizations and dehydrations to a trihydroxynaphthalene, which is thought to be delivered to the thioesterase (TE) domain for product release. The bifunctional enzyme CTB3 then methylates nor-toralactone to toralactone before conducting an unusual oxidative aromatic ring opening. The O-methyltransferase CTB2 further methylates the nascent OH-6 of the CBT3 product, blocking further oxidation at this site before the reductase CTB6 reduces the 2-oxopropyl ketone at position C7, giving naphthalene. The FAD-dependent monooxygenase CTB5 in concert with the multicopper oxidase CTB12 are responsible for homodimerization of naphthalene with CTB7 installing the dioxepine moiety, finally producing cercosporin. The fasciclin domain-containing protein CTB11 might act with CTB5 and CTB12 whereas the roles of CTB9 and CTB10 have still to be elucidated. This chain is Ketoreductase CTB6, found in Cercospora nicotianae (Barn spot disease fungus).